The primary structure comprises 139 residues: ATP synthase epsilon chain (139 aa).

It belongs to the ATPase epsilon chain family. F-type ATPases have 2 components, CF(1) - the catalytic core - and CF(0) - the membrane proton channel. CF(1) has five subunits: alpha(3), beta(3), gamma(1), delta(1), epsilon(1). CF(0) has three main subunits: a, b and c.

It is found in the cell membrane. Its function is as follows. Produces ATP from ADP in the presence of a proton gradient across the membrane. This chain is ATP synthase epsilon chain, found in Roseiflexus sp. (strain RS-1).